Consider the following 164-residue polypeptide: UPF0178 protein BRADO3147 (164 aa).

This sequence belongs to the UPF0178 family.

This Bradyrhizobium sp. (strain ORS 278) protein is UPF0178 protein BRADO3147.